A 179-amino-acid chain; its full sequence is Hypoxanthine phosphoribosyltransferase (179 aa).

Residues arginine 45 and glycine 46 each coordinate diphosphate. Position 101 (glutamate 101) interacts with GMP. Glutamate 101 is an IMP binding site. Residues glutamate 101 and aspartate 102 each coordinate Mg(2+). Aspartate 105 (proton acceptor) is an active-site residue. GMP is bound by residues 105–110, lysine 133, and aspartate 161; that span reads DTGYTL. IMP is bound by residues 105-110 and lysine 133; that span reads DTGYTL. Position 167 (arginine 167) interacts with diphosphate.

This sequence belongs to the purine/pyrimidine phosphoribosyltransferase family. Homotetramer. Mg(2+) is required as a cofactor.

Its subcellular location is the cytoplasm. It catalyses the reaction IMP + diphosphate = hypoxanthine + 5-phospho-alpha-D-ribose 1-diphosphate. It carries out the reaction GMP + diphosphate = guanine + 5-phospho-alpha-D-ribose 1-diphosphate. Its pathway is purine metabolism; IMP biosynthesis via salvage pathway; IMP from hypoxanthine: step 1/1. Its function is as follows. Purine salvage pathway enzyme which catalyzes the transfer of the ribosyl-5-phosphate group from 5-phospho-alpha-D-ribose 1-diphosphate (PRPP) to the N9 position of hypoxanthine to yield IMP (inosine 5'-monophosphate). To a lesser extent, can also act on guanine leading to GMP, but shows a highly less efficient activity with xanthine. The protein is Hypoxanthine phosphoribosyltransferase (hpt) of Haemophilus influenzae (strain ATCC 51907 / DSM 11121 / KW20 / Rd).